Here is a 1211-residue protein sequence, read N- to C-terminus: A disintegrin and metalloproteinase with thrombospondin motifs 2 (1211 aa).

The signal sequence occupies residues 1-29; it reads MDPPAGAARRLLCPALLLLLLLLPPPLLP. The propeptide occupies 30–253; sequence PPPPPANARL…GVLEEHANSS (224 aa). 2 N-linked (GlcNAc...) asparagine glycosylation sites follow: Asn112 and Asn251. Positions 266 to 470 constitute a Peptidase M12B domain; sequence YNIEVLLGVD…HSYDCLLDDP (205 aa). Intrachain disulfides connect Cys343–Cys392, Cys386–Cys465, Cys425–Cys451, Cys492–Cys517, Cys503–Cys526, Cys512–Cys545, Cys539–Cys550, Cys573–Cys610, Cys577–Cys615, and Cys588–Cys600. Residue His408 coordinates Zn(2+). The active site involves Glu409. Zn(2+) contacts are provided by His412 and His418. Positions 480–560 constitute a Disintegrin domain; sequence QLPGLHYSMN…IWLTPDILKR (81 aa). The 56-residue stretch at 561–616 folds into the TSP type-1 1 domain; that stretch reads DGSWGAWSPFGSCSRTCGTGVKFRTRQCDNPHPANGGRTCSGLAYDFQLCSRQDCP. A Cell attachment site motif is present at residues 691 to 693; the sequence is RGD. Residues 723–851 are spacer; the sequence is KVVKGTFTRS…NVDDNNVLEE (129 aa). TSP type-1 domains are found at residues 854–912, 914–971, and 975–1029; these read VVYE…NPQE, SQPV…RACS, and CPGR…GPCP. 2 N-linked (GlcNAc...) asparagine glycosylation sites follow: Asn949 and Asn993. 3 cysteine pairs are disulfide-bonded: Cys987-Cys1023, Cys991-Cys1028, and Cys1002-Cys1012. Asn1031 carries an N-linked (GlcNAc...) asparagine glycan. The PLAC domain maps to 1059-1097; sequence SKGHCQGDKSIFCRMEVLSRYCSIPGYNKLCCKSCNLYN. Residues Asn1098, Asn1145, and Asn1150 are each glycosylated (N-linked (GlcNAc...) asparagine). Residues 1170–1191 are disordered; that stretch reads LEDEVQPPNLIPRRPSPYEKTR.

As to quaternary structure, may belong to a multimeric complex. Binds specifically to collagen type XIV. It depends on Zn(2+) as a cofactor. In terms of processing, the precursor is cleaved by a furin endopeptidase. Glycosylated. Can be O-fucosylated by POFUT2 on a serine or a threonine residue found within the consensus sequence C1-X(2)-(S/T)-C2-G of the TSP type-1 repeat domains where C1 and C2 are the first and second cysteine residue of the repeat, respectively. Fucosylated repeats can then be further glycosylated by the addition of a beta-1,3-glucose residue by the glucosyltransferase, B3GALTL. Fucosylation mediates the efficient secretion of ADAMTS family members. Can also be C-glycosylated with one or two mannose molecules on tryptophan residues within the consensus sequence W-X-X-W of the TPRs, and N-glycosylated. These other glycosylations can also facilitate secretion. In terms of tissue distribution, expressed at high level in skin, bone, tendon and aorta and at low levels in thymus and brain.

Its subcellular location is the secreted. The protein localises to the extracellular space. It localises to the extracellular matrix. The catalysed reaction is Cleaves the N-propeptide of collagen chain alpha1(I) at Pro-|-Gln and of alpha1(II) and alpha2(I) at Ala-|-Gln.. Cleaves the propeptides of type I and II collagen prior to fibril assembly. Does not act on type III collagen. Cleaves lysyl oxidase LOX at a site downstream of its propeptide cleavage site to produce a short LOX form with reduced collagen-binding activity. This chain is A disintegrin and metalloproteinase with thrombospondin motifs 2 (ADAMTS2), found in Homo sapiens (Human).